The chain runs to 352 residues: Holliday junction branch migration complex subunit RuvB (352 aa).

The interval 4–185 (PDRLISAVSG…FGIVQRLEFY (182 aa)) is large ATPase domain (RuvB-L). ATP contacts are provided by residues I24, R25, G66, K69, T70, T71, 132–134 (EDF), R175, Y185, and R222. Mg(2+) is bound at residue T70. Positions 186–256 (NVEDLATIVS…IADKALNLLD (71 aa)) are small ATPAse domain (RuvB-S). The head domain (RuvB-H) stretch occupies residues 259–352 (ERGFDHLDRR…SDLFTSEDGN (94 aa)). The DNA site is built by R295, R314, and R319.

Belongs to the RuvB family. Homohexamer. Forms an RuvA(8)-RuvB(12)-Holliday junction (HJ) complex. HJ DNA is sandwiched between 2 RuvA tetramers; dsDNA enters through RuvA and exits via RuvB. An RuvB hexamer assembles on each DNA strand where it exits the tetramer. Each RuvB hexamer is contacted by two RuvA subunits (via domain III) on 2 adjacent RuvB subunits; this complex drives branch migration. In the full resolvosome a probable DNA-RuvA(4)-RuvB(12)-RuvC(2) complex forms which resolves the HJ.

It is found in the cytoplasm. It catalyses the reaction ATP + H2O = ADP + phosphate + H(+). The RuvA-RuvB-RuvC complex processes Holliday junction (HJ) DNA during genetic recombination and DNA repair, while the RuvA-RuvB complex plays an important role in the rescue of blocked DNA replication forks via replication fork reversal (RFR). RuvA specifically binds to HJ cruciform DNA, conferring on it an open structure. The RuvB hexamer acts as an ATP-dependent pump, pulling dsDNA into and through the RuvAB complex. RuvB forms 2 homohexamers on either side of HJ DNA bound by 1 or 2 RuvA tetramers; 4 subunits per hexamer contact DNA at a time. Coordinated motions by a converter formed by DNA-disengaged RuvB subunits stimulates ATP hydrolysis and nucleotide exchange. Immobilization of the converter enables RuvB to convert the ATP-contained energy into a lever motion, pulling 2 nucleotides of DNA out of the RuvA tetramer per ATP hydrolyzed, thus driving DNA branch migration. The RuvB motors rotate together with the DNA substrate, which together with the progressing nucleotide cycle form the mechanistic basis for DNA recombination by continuous HJ branch migration. Branch migration allows RuvC to scan DNA until it finds its consensus sequence, where it cleaves and resolves cruciform DNA. In Pseudomonas paraeruginosa (strain DSM 24068 / PA7) (Pseudomonas aeruginosa (strain PA7)), this protein is Holliday junction branch migration complex subunit RuvB.